Consider the following 764-residue polypeptide: Subtilisin-like protease SBT3.1 (764 aa).

An N-terminal signal peptide occupies residues 1 to 32 (MIQTLKTDSSFRLCFAAIAFGFVFIMNGKLSS). Residues 33-120 (GTTPHEFPVY…LLENRKLGLQ (88 aa)) constitute a propeptide, activation peptide. The region spanning 41 to 116 (VYIFYLGERK…EVIILLENRK (76 aa)) is the Inhibitor I9 domain. N76 is a glycosylation site (N-linked (GlcNAc...) asparagine). In terms of domain architecture, Peptidase S8 spans 124–610 (TWDYLGQFST…GGLVNLEKAT (487 aa)). Catalysis depends on D156, which acts as the Charge relay system. N216 carries N-linked (GlcNAc...) asparagine glycosylation. The Charge relay system role is filled by H230. N245 and N374 each carry an N-linked (GlcNAc...) asparagine glycan. The active-site Charge relay system is the S541. N-linked (GlcNAc...) asparagine glycosylation is found at N674, N711, and N747.

This sequence belongs to the peptidase S8 family.

Its subcellular location is the secreted. The chain is Subtilisin-like protease SBT3.1 from Arabidopsis thaliana (Mouse-ear cress).